The primary structure comprises 254 residues: Geranylgeranylglyceryl phosphate synthase (254 aa).

2 residues coordinate Mg(2+): Asp-27 and Ser-56. Sn-glycerol 1-phosphate contacts are provided by residues 174-180 (YLEAGSG), 212-213 (GG), and 234-235 (GT).

Belongs to the GGGP/HepGP synthase family. Group II subfamily. Homohexamer. Mg(2+) is required as a cofactor.

It is found in the cytoplasm. The enzyme catalyses sn-glycerol 1-phosphate + (2E,6E,10E)-geranylgeranyl diphosphate = sn-3-O-(geranylgeranyl)glycerol 1-phosphate + diphosphate. Its pathway is membrane lipid metabolism; glycerophospholipid metabolism. Prenyltransferase that catalyzes the transfer of the geranylgeranyl moiety of geranylgeranyl diphosphate (GGPP) to the C3 hydroxyl of sn-glycerol-1-phosphate (G1P). This reaction is the first ether-bond-formation step in the biosynthesis of archaeal membrane lipids. In Aeropyrum pernix (strain ATCC 700893 / DSM 11879 / JCM 9820 / NBRC 100138 / K1), this protein is Geranylgeranylglyceryl phosphate synthase.